Here is a 224-residue protein sequence, read N- to C-terminus: Ras-related protein Rab-11C (224 aa).

17-24 serves as a coordination point for GTP; the sequence is GDSAVGKS. Positions 39–47 match the Effector region motif; sequence TKATIGVDF. GTP is bound by residues 65-69 and 123-126; these read DTAGQ and NKSD. Positions 194-224 are disordered; that stretch reads QGKKLTPLSDPAPQLTANTTSTHQEKKSGCC. 2 S-geranylgeranyl cysteine lipidation sites follow: cysteine 223 and cysteine 224.

Belongs to the small GTPase superfamily. Rab family.

It is found in the membrane. This Dictyostelium discoideum (Social amoeba) protein is Ras-related protein Rab-11C (rab11C).